The chain runs to 242 residues: Ribonuclease PH (242 aa).

Residues Arg-89 and 127–129 (GTR) contribute to the phosphate site.

This sequence belongs to the RNase PH family. As to quaternary structure, homohexameric ring arranged as a trimer of dimers.

It catalyses the reaction tRNA(n+1) + phosphate = tRNA(n) + a ribonucleoside 5'-diphosphate. Its function is as follows. Phosphorolytic 3'-5' exoribonuclease that plays an important role in tRNA 3'-end maturation. Removes nucleotide residues following the 3'-CCA terminus of tRNAs; can also add nucleotides to the ends of RNA molecules by using nucleoside diphosphates as substrates, but this may not be physiologically important. Probably plays a role in initiation of 16S rRNA degradation (leading to ribosome degradation) during starvation. The protein is Ribonuclease PH of Neisseria meningitidis serogroup B (strain ATCC BAA-335 / MC58).